A 319-amino-acid polypeptide reads, in one-letter code: L-lactate dehydrogenase (319 aa).

NAD(+)-binding positions include Val17, Asp38, Lys43, Tyr69, and 83–84; that span reads GA. Residues Gln86, Arg92, and 124–127 each bind substrate; that span reads NPVD. NAD(+)-binding positions include 122–124 and Ser147; that span reads ATN. 152–155 provides a ligand contact to substrate; that stretch reads DTAR. Residues Arg157 and His172 each coordinate beta-D-fructose 1,6-bisphosphate. His179 (proton acceptor) is an active-site residue. Residue Tyr224 is modified to Phosphotyrosine. Residue Thr233 participates in substrate binding.

Belongs to the LDH/MDH superfamily. LDH family. Homotetramer.

The protein resides in the cytoplasm. It catalyses the reaction (S)-lactate + NAD(+) = pyruvate + NADH + H(+). It participates in fermentation; pyruvate fermentation to lactate; (S)-lactate from pyruvate: step 1/1. Its activity is regulated as follows. Allosterically activated by fructose 1,6-bisphosphate (FBP). Functionally, catalyzes the conversion of lactate to pyruvate. The sequence is that of L-lactate dehydrogenase from Bacillus licheniformis (strain ATCC 14580 / DSM 13 / JCM 2505 / CCUG 7422 / NBRC 12200 / NCIMB 9375 / NCTC 10341 / NRRL NRS-1264 / Gibson 46).